A 427-amino-acid chain; its full sequence is 3-phosphoshikimate 1-carboxyvinyltransferase (427 aa).

Positions 22, 23, and 27 each coordinate 3-phosphoshikimate. K22 is a phosphoenolpyruvate binding site. Phosphoenolpyruvate contacts are provided by G96 and R124. S170, S171, Q172, S199, D313, N336, and K340 together coordinate 3-phosphoshikimate. Q172 is a phosphoenolpyruvate binding site. The Proton acceptor role is filled by D313. The phosphoenolpyruvate site is built by R344, R386, and K411.

It belongs to the EPSP synthase family. In terms of assembly, monomer.

The protein resides in the cytoplasm. It catalyses the reaction 3-phosphoshikimate + phosphoenolpyruvate = 5-O-(1-carboxyvinyl)-3-phosphoshikimate + phosphate. The protein operates within metabolic intermediate biosynthesis; chorismate biosynthesis; chorismate from D-erythrose 4-phosphate and phosphoenolpyruvate: step 6/7. Catalyzes the transfer of the enolpyruvyl moiety of phosphoenolpyruvate (PEP) to the 5-hydroxyl of shikimate-3-phosphate (S3P) to produce enolpyruvyl shikimate-3-phosphate and inorganic phosphate. The chain is 3-phosphoshikimate 1-carboxyvinyltransferase from Aeromonas salmonicida.